A 649-amino-acid chain; its full sequence is Solute carrier family 22 member 16 (649 aa).

Residues 19–39 (FQIVLYLICAYQSLSCGIHYL) form a helical membrane-spanning segment. N65 and N108 each carry an N-linked (GlcNAc...) asparagine glycan. 5 helical membrane passes run 156 to 176 (MIQP…SYLS), 190 to 210 (IGVF…SFMI), 214 to 234 (FLVM…MEII), 244 to 264 (IHLN…SYLL), and 268 to 288 (WLYQ…CWML). Residue N315 is glycosylated (N-linked (GlcNAc...) asparagine). 6 helical membrane-spanning segments follow: residues 356-376 (AKMT…YYMF), 389-409 (LYLL…CIWL), 417-437 (TMLL…VMPS), 445-465 (MVAL…YLYT), 475-495 (CLAV…IPFT), and 501-521 (VWIF…GLLS). Residues 530-544 (TPMKSTWETTEQQVP) are compositionally biased toward polar residues. 2 disordered regions span residues 530-560 (TPMK…SFER) and 579-649 (SPDA…LGGF).

The protein belongs to the major facilitator (TC 2.A.1) superfamily. Organic cation transporter (TC 2.A.1.19) family.

It is found in the cell membrane. The catalysed reaction is (R)-carnitine(in) = (R)-carnitine(out). The enzyme catalyses spermidine(in) = spermidine(out). Its function is as follows. Facilitative organic cation transporter that mediates the transport of carnitine as well as the polyamine spermidine. Mediates the partially Na(+)-dependent bidirectional transport of carnitine. May mediate L-carnitine secretion from testis epididymal epithelium into the lumen which is involved in the maturation of spermatozoa. In Mus musculus (Mouse), this protein is Solute carrier family 22 member 16.